Reading from the N-terminus, the 441-residue chain is Ribosomal protein uS12 methylthiotransferase RimO (441 aa).

The region spanning Pro7 to Pro117 is the MTTase N-terminal domain. 6 residues coordinate [4Fe-4S] cluster: Cys16, Cys52, Cys81, Cys148, Cys152, and Cys155. Residues Leu134 to Arg371 enclose the Radical SAM core domain. The 67-residue stretch at Lys374 to Gly440 folds into the TRAM domain.

The protein belongs to the methylthiotransferase family. RimO subfamily. [4Fe-4S] cluster serves as cofactor.

It is found in the cytoplasm. The enzyme catalyses L-aspartate(89)-[ribosomal protein uS12]-hydrogen + (sulfur carrier)-SH + AH2 + 2 S-adenosyl-L-methionine = 3-methylsulfanyl-L-aspartate(89)-[ribosomal protein uS12]-hydrogen + (sulfur carrier)-H + 5'-deoxyadenosine + L-methionine + A + S-adenosyl-L-homocysteine + 2 H(+). Catalyzes the methylthiolation of an aspartic acid residue of ribosomal protein uS12. This is Ribosomal protein uS12 methylthiotransferase RimO from Rhodopseudomonas palustris (strain BisB5).